The sequence spans 89 residues: Small ribosomal subunit protein uS15 (89 aa).

This sequence belongs to the universal ribosomal protein uS15 family. Part of the 30S ribosomal subunit. Forms a bridge to the 50S subunit in the 70S ribosome, contacting the 23S rRNA.

In terms of biological role, one of the primary rRNA binding proteins, it binds directly to 16S rRNA where it helps nucleate assembly of the platform of the 30S subunit by binding and bridging several RNA helices of the 16S rRNA. Forms an intersubunit bridge (bridge B4) with the 23S rRNA of the 50S subunit in the ribosome. The polypeptide is Small ribosomal subunit protein uS15 (Prochlorococcus marinus (strain MIT 9215)).